The following is a 274-amino-acid chain: Thiazole synthase (274 aa).

Lys-115 acts as the Schiff-base intermediate with DXP in catalysis. 1-deoxy-D-xylulose 5-phosphate-binding positions include Gly-176, 202 to 203, and 224 to 225; these read AG and NS.

The protein belongs to the ThiG family. Homotetramer. Forms heterodimers with either ThiH or ThiS.

It localises to the cytoplasm. The catalysed reaction is [ThiS sulfur-carrier protein]-C-terminal-Gly-aminoethanethioate + 2-iminoacetate + 1-deoxy-D-xylulose 5-phosphate = [ThiS sulfur-carrier protein]-C-terminal Gly-Gly + 2-[(2R,5Z)-2-carboxy-4-methylthiazol-5(2H)-ylidene]ethyl phosphate + 2 H2O + H(+). It participates in cofactor biosynthesis; thiamine diphosphate biosynthesis. Catalyzes the rearrangement of 1-deoxy-D-xylulose 5-phosphate (DXP) to produce the thiazole phosphate moiety of thiamine. Sulfur is provided by the thiocarboxylate moiety of the carrier protein ThiS. In vitro, sulfur can be provided by H(2)S. This chain is Thiazole synthase, found in Parasynechococcus marenigrum (strain WH8102).